Reading from the N-terminus, the 296-residue chain is SHSP domain-containing protein CPUR_05420 (296 aa).

The disordered stretch occupies residues 50-83; it reads AWQTCPQQRHPHQPDVSGPPGSGFGEQPSQDTPN. The 128-residue stretch at 169–296 folds into the sHSP domain; the sequence is ETKKSFTPDI…GKGVKEITIV (128 aa).

Belongs to the small heat shock protein (HSP20) family.

In terms of biological role, monooxygenase; part of the ergochrome gene cluster responsible for the typical purple-black color of the ergot sclerotia. The ergochrome gene cluster produces several ergot pigments including the yellow ergochrome secalonic acid and its derivatives, as well as the red anthraquinones endocrocin and clavorubin. The pathway begins with the synthesis of atrochrysone thioester by the polyketide synthase (PKS) CPUR_05437. The atrochrysone carboxyl ACP thioesterase CPUR_05436 then breaks the thioester bond and releases the atrochrysone carboxylic acid from CPUR_05437. The atrochrysone carboxylic acid is then converted to atrochrysone which is further transformed into emodin anthrone. The next step is performed by the anthrone oxygenase CPUR_05434 that catalyzes the oxidation of emodinanthrone to emodin. Emodin is further modified to yield monodictyphenone via several steps involving CPUR_05427, CPUR_05428, CPUR_05429 and CPUR_05430. The short chain dehydrogenase/reductase CPUR_05418 then catalyzes the C-5 ketoreduction to give the xanthone skeleton of the monomeric units. Ergochromes formation requires further dimerization steps of different xanthone units, probably catalyzed by the cytochrome P450 monooxygenase CPUR_05419. CPUR_05425, CPUR_05426 and CPUR_05431 are unique to Claviceps, thus it is likely that they are involved in further modification of xanthone units or in their dimerization. The yellow ergochromes and the red anthraquinone pigments endocrocin and clavorubin are products from the same PKS derived precursors and the latter are likely shunt products in the pathway of xanthone biosynthesis. It is proposed that atrochrysone carboxylic acid released from the PKS CPUR_05437 can also be converted to endocrocin anthrone which is further oxidized into endocrocin by CPUR_05435. Endocrocin could be then modified to clavorubin, possibly by CPUR_05423 and CPUR_05431. Clavorubin is the principal anthraquinone metabolite produced by the cluster with a much higher yield compared to endocrocin. This is SHSP domain-containing protein CPUR_05420 from Claviceps purpurea (strain 20.1) (Ergot fungus).